We begin with the raw amino-acid sequence, 224 residues long: NBPF family member NBPF6-like protein (224 aa).

The Olduvai domain maps to 159 to 224 (ENHHDRKDEE…ASVCDVQDQL (66 aa)). Residues 198–209 (YLTHSSHHDSHR) show a composition bias toward basic and acidic residues. The interval 198–224 (YLTHSSHHDSHRPPSSIASVCDVQDQL) is disordered.

It belongs to the NBPF family.

The protein is NBPF family member NBPF6-like protein of Bos taurus (Bovine).